Reading from the N-terminus, the 201-residue chain is MSHDTNTIDSRTHEGELNKLGFWIFITAEFALFGTLFATLLTLQHGGDYAGKMTTELFELPLVLIMTFALLFSSYTCGIAIYYMRQEKQKLMMFWMIITLLLGLVFVGFEIYEFAHYASEGVNPTIGSYWSSFFILLGTHGCHVSLGIVWAICLLIQIQRRGLDKYNAPKLFIVSLYWHFLDVVWVFIFTAVYMIGMVYSG.

The next 5 helical transmembrane spans lie at 20–40 (LGFW…FATL), 62–82 (LVLI…IAIY), 91–111 (LMMF…GFEI), 133–153 (FFIL…WAIC), and 172–192 (FIVS…FTAV).

Belongs to the cytochrome c oxidase subunit 3 family.

Its subcellular location is the cell membrane. It carries out the reaction 2 a quinol + O2 = 2 a quinone + 2 H2O. In terms of biological role, catalyzes quinol oxidation with the concomitant reduction of oxygen to water. This is Probable quinol oxidase subunit 3 (qoxC) from Staphylococcus aureus (strain MSSA476).